The sequence spans 114 residues: MRTLLIGMIWVYQKVISPLKRPTCRYYPSCSEYALWLFSYSNFWYALLFSLRRILRCNSLFEGGIDYPIISKRITPIFGSPRLIKVWLVPLCPQKDWSAKGKFYLIKSMKVVQC.

Belongs to the UPF0161 family.

Its subcellular location is the cell inner membrane. Could be involved in insertion of integral membrane proteins into the membrane. This is Putative membrane protein insertion efficiency factor from Wolinella succinogenes (strain ATCC 29543 / DSM 1740 / CCUG 13145 / JCM 31913 / LMG 7466 / NCTC 11488 / FDC 602W) (Vibrio succinogenes).